Here is a 366-residue protein sequence, read N- to C-terminus: MTILNRFCRTILLTNLELTNCGIRKNNSYKCRSFTHTINIDTNHIVPIHTQSNITLELFQPKISVVGVGGGGGNAVNHMISQSLEGVEFFVCNTDSQDLIKSNSINKIQLGPQLTKGHGAGANPEKGRLAAEESKNKIIQTFKDTDLLFLAAGMGGGTGTGSSPIIAKTIKEFKKETIIVGVVTVPFNFEGKRKEIIAKKGLEELSKYVDTLVVISNQNLLDASKSDIQLEQAFLMVDEILHTGIRSIANIINVPGMINLDYSDVVNILKNRKGLSRIGFGEASGEDRAYKAVHKAIKNPLIEIDDQKFTGLLVNISGGNDITLNEISKTINYLQQNADPDVQVFVGHTVDNSLLGKIRISCLFVH.

GTP is bound by residues 70-74 (GGGGN), 157-159 (GTG), Glu-190, and Asp-238.

It belongs to the FtsZ family.

It localises to the mitochondrion. Functionally, probably involved in mitochondrion division process. Binds to and hydrolyzes GTP. This chain is Mitochondrial division protein fszB (fszB), found in Dictyostelium discoideum (Social amoeba).